Here is a 181-residue protein sequence, read N- to C-terminus: TATA-box-binding protein (181 aa).

Repeat copies occupy residues 8–84 (IENI…VDLM) and 99–175 (IQNI…YDRL).

Belongs to the TBP family.

In terms of biological role, general factor that plays a role in the activation of archaeal genes transcribed by RNA polymerase. Binds specifically to the TATA box promoter element which lies close to the position of transcription initiation. This chain is TATA-box-binding protein, found in Methanobrevibacter smithii (strain ATCC 35061 / DSM 861 / OCM 144 / PS).